Here is a 241-residue protein sequence, read N- to C-terminus: Endodeoxyribonuclease NucC (241 aa).

Catalysis depends on residues aspartate 73, glutamate 104, and lysine 106. Positions 73 and 104 each coordinate Mg(2+).

This sequence belongs to the NucC endonuclease family. In terms of assembly, self-oligomerizes. Forms homotrimers; in the presence of cAAA the trimers associate face-to-face to form homohexamers. The 2 cAAA-binding sites are on the exterior of the hexamer at the three-way junction, there are maximally 2 cyclic nucleotides per hexamer. Mg(2+) is required as a cofactor.

With respect to regulation, activated by cAAA and to a lesser extent cAA and cAAG; cAAA and cAA are products of its cognate CD-NTase. Cyclic nucleotide binding causes hexamerization. Cyclic nucleotide binding causes a series of shifts that enclose the cAAA molecule, enable hexamer formation and juxtapose pairs of active sites to allow dsDNA cleavage. Functionally, effector DNase of a CBASS antivirus system. CBASS (cyclic oligonucleotide-based antiphage signaling system) provides immunity against bacteriophage. The CD-NTase protein synthesizes cyclic nucleotides in response to infection; these serve as specific second messenger signals. The signals activate a diverse range of effectors, leading to bacterial cell death and thus abortive phage infection. A type III-C(AAA) CBASS system. In terms of biological role, a cyclic nucleotide-activated dsDNase. In the presence of 3',3',3'-cyclic AMP-AMP-AMP (cAAA), and to a lesser extent 3',3',3'-cyclic AMP-AMP-GMP (cAAG) and cyclic-di-AMP (c-di-AMP), endonucleolytically degrades dsDNA. Binds one cAAA in a pocket on one surface of the trimer; cAAA binding promotes hexamerization, which is necessary for nuclease activation. Also binds c-diAMP or linear di-AMP with lower affinity. The nuclease digests dsDNA to about 50 bp lengths with a 2-base 3' overhang and a consensus recognition site of 5'-Axx|T-3'. DNA has been modeled to contact a pair of juxtaposed active sites (one from each layer of the hexamer), accounting for cleavage on both strands and the 2-base overhang. Protects E.coli strain JP313 against bacteriophage lambda cI- infection. When the cdnC-cap7-cap6-nucC operon is transformed into a susceptible strain it confers bacteriophage immunity. Mutations in the sensor (Cap7 also called HORMA) or effector proteins (CdnC, NucC) but not the disassembly protein (Cap6 also called Trip13) no longer confer immunity. The presence of the intact operon leads to culture collapse and cell death which occurs before the phage has finished its replication cycle, thus protecting non-infected bacteria by aborting the phage infection and preventing its propagation. The sequence is that of Endodeoxyribonuclease NucC from Escherichia coli (strain MS 115-1).